The sequence spans 338 residues: Tetraacyldisaccharide 4'-kinase (338 aa).

65 to 72 (TVGGTGKT) is an ATP binding site.

The protein belongs to the LpxK family.

It catalyses the reaction a lipid A disaccharide + ATP = a lipid IVA + ADP + H(+). It participates in glycolipid biosynthesis; lipid IV(A) biosynthesis; lipid IV(A) from (3R)-3-hydroxytetradecanoyl-[acyl-carrier-protein] and UDP-N-acetyl-alpha-D-glucosamine: step 6/6. Transfers the gamma-phosphate of ATP to the 4'-position of a tetraacyldisaccharide 1-phosphate intermediate (termed DS-1-P) to form tetraacyldisaccharide 1,4'-bis-phosphate (lipid IVA). The protein is Tetraacyldisaccharide 4'-kinase of Paraburkholderia xenovorans (strain LB400).